A 718-amino-acid chain; its full sequence is Pullulanase (718 aa).

The active-site Nucleophile is the D406. Residue E435 is the Proton donor of the active site.

Belongs to the glycosyl hydrolase 13 family.

The catalysed reaction is Hydrolysis of (1-&gt;6)-alpha-D-glucosidic linkages in pullulan, amylopectin and glycogen, and in the alpha- and beta-limit dextrins of amylopectin and glycogen.. This Bacillus subtilis (strain 168) protein is Pullulanase (amyX).